Reading from the N-terminus, the 138-residue chain is Large ribosomal subunit protein uL16 (138 aa).

The protein belongs to the universal ribosomal protein uL16 family. As to quaternary structure, part of the 50S ribosomal subunit.

Its function is as follows. Binds 23S rRNA and is also seen to make contacts with the A and possibly P site tRNAs. This chain is Large ribosomal subunit protein uL16, found in Chlamydia felis (strain Fe/C-56) (Chlamydophila felis).